We begin with the raw amino-acid sequence, 214 residues long: Large ribosomal subunit protein uL4 (214 aa).

The segment at 43 to 83 (RRQAGTHKAKSRSEVNRTTKKSIKQKGSGGARHGSRNAPIF) is disordered.

This sequence belongs to the universal ribosomal protein uL4 family. Part of the 50S ribosomal subunit.

In terms of biological role, one of the primary rRNA binding proteins, this protein initially binds near the 5'-end of the 23S rRNA. It is important during the early stages of 50S assembly. It makes multiple contacts with different domains of the 23S rRNA in the assembled 50S subunit and ribosome. Functionally, forms part of the polypeptide exit tunnel. This Hyphomonas neptunium (strain ATCC 15444) protein is Large ribosomal subunit protein uL4.